We begin with the raw amino-acid sequence, 625 residues long: Voltage-gated potassium channel KCNC4 (625 aa).

Disordered regions lie at residues 1-24 (MISSVCVSSYRGRKSGNKPPSKTC) and 65-86 (LADPDGGGRPESDGGGAGSSGS). The segment at 1–28 (MISSVCVSSYRGRKSGNKPPSKTCLKEE) is inactivation gate. Over 1 to 227 (MISSVCVSSY…EDPYSSRAAR (227 aa)) the chain is Cytoplasmic. Residues serine 8, serine 9, serine 15, and serine 21 each carry the phosphoserine modification. Over residues 77-86 (DGGGAGSSGS) the composition is skewed to gly residues. Positions 117, 123, 144, and 145 each coordinate Zn(2+). A helical membrane pass occupies residues 228–248 (VVAFASLFFILVSITTFCLET). Asparagine 257 and asparagine 266 each carry an N-linked (GlcNAc...) asparagine glycan. Residues 279 to 299 (EPILTYIEGVCVMWFTLEFLV) traverse the membrane as a helical segment. The Cytoplasmic portion of the chain corresponds to 300-313 (RIVCCPDTLDFVKN). Residues 314–334 (LLNIIDFVAILPFYLEVGLSG) form a helical membrane-spanning segment. The chain crosses the membrane as a helical; Voltage-sensor span at residues 346–365 (FLRVVRFVRILRIFKLTRHF). At 366–381 (VGLRVLGHTLRASTNE) the chain is on the cytoplasmic side. A helical membrane pass occupies residues 382–402 (FLLLIIFLALGVLIFATMIYY). Residues threonine 437, leucine 438, glycine 439, and tyrosine 440 each coordinate K(+). Positions 437–442 (TLGYGD) match the Selectivity filter motif. The helical transmembrane segment at 453–473 (VGALCALAGVLTIAMPVPVIV) threads the bilayer. Topologically, residues 474–625 (NNFGMYYSLA…CVPVSHTCAL (152 aa)) are cytoplasmic. Residues 490–581 (PKKRKKHVPR…RRALRRSGTR (92 aa)) are disordered. Over residues 528–543 (AREEGMVERKRADSKQ) the composition is skewed to basic and acidic residues.

This sequence belongs to the potassium channel family. C (Shaw) (TC 1.A.1.2) subfamily. Kv3.4/KCNC4 sub-subfamily. In terms of assembly, homotetramer. Heterotetramer of potassium channel proteins. In terms of processing, phosphorylation of serine residues in the inactivation gate inhibits rapid channel closure.

The protein resides in the membrane. The catalysed reaction is K(+)(in) = K(+)(out). Functionally, voltage-gated potassium channel that opens in response to the voltage difference across the membrane, forming a potassium-selective channel through which potassium ions pass in accordance with their electrochemical gradient. The channel displays rapid activation and inactivation kinetics. This is Voltage-gated potassium channel KCNC4 from Rattus norvegicus (Rat).